We begin with the raw amino-acid sequence, 422 residues long: Probable alpha-1,6-mannosyltransferase MNN11 (422 aa).

The Cytoplasmic segment spans residues 1 to 31; that stretch reads MAIKPRTKGKTYSSRSVGSQWFNRLGFKQNK. The chain crosses the membrane as a helical; Signal-anchor for type II membrane protein span at residues 32-52; it reads YGTCKFLSIITAFVFILYFFS. Residues 53-422 are Lumenal-facing; it reads NRFYPISRSA…GHMYQKIKKS (370 aa).

Belongs to the glycosyltransferase 34 family. In terms of assembly, component of the M-Pol II complex composed of ANP1, MNN9, MNN10, MNN11 and HOC1.

It is found in the golgi apparatus. The protein resides in the cis-Golgi network membrane. Functionally, required for synthesis of full-length mannan chains. In terms of biological role, the M-Pol II complex possesses alpha-1,6-mannosyltransferase activity and is probably involved in the elongation of the mannan backbone of N-linked glycans on cell wall and periplasmic proteins. This is Probable alpha-1,6-mannosyltransferase MNN11 (MNN11) from Saccharomyces cerevisiae (strain ATCC 204508 / S288c) (Baker's yeast).